We begin with the raw amino-acid sequence, 40 residues long: Acyl-CoA-binding protein 2 (40 aa).

Residues 1–15 are compositionally biased toward basic and acidic residues; that stretch reads ALKEEFEEHAEKAKT. Residues 1 to 25 are disordered; the sequence is ALKEEFEEHAEKAKTLPENTSSENK. One can recognise an ACB domain in the interval 2–40; that stretch reads LKEEFEEHAEKAKTLPENTSSENKLTLYGLYKQATVGNV.

The protein belongs to the ACBP family.

It is found in the cytoplasm. Its function is as follows. Binds medium- and long-chain acyl-CoA esters with very high affinity and may function as an intracellular carrier of acyl-CoA esters. The chain is Acyl-CoA-binding protein 2 from Digitalis lanata (Grecian foxglove).